We begin with the raw amino-acid sequence, 111 residues long: Phosphoribosyl-ATP pyrophosphatase (111 aa).

It belongs to the PRA-PH family.

It localises to the cytoplasm. The enzyme catalyses 1-(5-phospho-beta-D-ribosyl)-ATP + H2O = 1-(5-phospho-beta-D-ribosyl)-5'-AMP + diphosphate + H(+). Its pathway is amino-acid biosynthesis; L-histidine biosynthesis; L-histidine from 5-phospho-alpha-D-ribose 1-diphosphate: step 2/9. The sequence is that of Phosphoribosyl-ATP pyrophosphatase from Alcanivorax borkumensis (strain ATCC 700651 / DSM 11573 / NCIMB 13689 / SK2).